The chain runs to 334 residues: N-acetyl-gamma-glutamyl-phosphate reductase (334 aa).

C154 is an active-site residue.

It belongs to the NAGSA dehydrogenase family. Type 1 subfamily.

The protein resides in the cytoplasm. The enzyme catalyses N-acetyl-L-glutamate 5-semialdehyde + phosphate + NADP(+) = N-acetyl-L-glutamyl 5-phosphate + NADPH + H(+). Its pathway is amino-acid biosynthesis; L-arginine biosynthesis; N(2)-acetyl-L-ornithine from L-glutamate: step 3/4. Its function is as follows. Catalyzes the NADPH-dependent reduction of N-acetyl-5-glutamyl phosphate to yield N-acetyl-L-glutamate 5-semialdehyde. The polypeptide is N-acetyl-gamma-glutamyl-phosphate reductase (Salmonella typhimurium (strain LT2 / SGSC1412 / ATCC 700720)).